We begin with the raw amino-acid sequence, 343 residues long: L-lysine cyclodeaminase (343 aa).

This sequence belongs to the ornithine cyclodeaminase/mu-crystallin family. NAD(+) is required as a cofactor.

The enzyme catalyses L-lysine = L-pipecolate + NH4(+). The protein operates within antibiotic biosynthesis. Inhibited by nipecotic acid and thiazolidine-2-carboxylic acid. Converts L-lysine to L-pipecolate, which is incorporated into multiple secondary metabolite products, including rapamycin, tobulysin, virginiamycin and pristinamycin. The sequence is that of L-lysine cyclodeaminase (rapL) from Streptomyces rapamycinicus (strain ATCC 29253 / DSM 41530 / NRRL 5491 / AYB-994) (Streptomyces hygroscopicus (strain ATCC 29253)).